The sequence spans 208 residues: Mediator of RNA polymerase II transcription subunit 21 (208 aa).

Residues 52–122 (TKNSTAPPAP…PDSPRTFASR (71 aa)) form a disordered region. Residues 63–83 (GAPAGSQASPQQQSAQIPGQQ) show a composition bias toward low complexity. Gly residues predominate over residues 84-104 (QQGGGDAGQTPGAGGGTGGAG). Positions 146 to 195 (GIDSSEAEQERRIKELEKELRSAEEDREQRVRELRKLRKKLENVLGAVEV) form a coiled coil.

This sequence belongs to the Mediator complex subunit 21 family. Component of the Mediator complex.

The protein localises to the nucleus. Its function is as follows. Component of the Mediator complex, a coactivator involved in the regulated transcription of nearly all RNA polymerase II-dependent genes. Mediator functions as a bridge to convey information from gene-specific regulatory proteins to the basal RNA polymerase II transcription machinery. Mediator is recruited to promoters by direct interactions with regulatory proteins and serves as a scaffold for the assembly of a functional preinitiation complex with RNA polymerase II and the general transcription factors. In Aspergillus oryzae (strain ATCC 42149 / RIB 40) (Yellow koji mold), this protein is Mediator of RNA polymerase II transcription subunit 21 (srb7).